A 423-amino-acid polypeptide reads, in one-letter code: Glucose-1-phosphate adenylyltransferase (423 aa).

Alpha-D-glucose 1-phosphate-binding positions include Tyr-110, Gly-175, 190-191 (EK), and Ser-208.

This sequence belongs to the bacterial/plant glucose-1-phosphate adenylyltransferase family. As to quaternary structure, homotetramer.

The catalysed reaction is alpha-D-glucose 1-phosphate + ATP + H(+) = ADP-alpha-D-glucose + diphosphate. It participates in glycan biosynthesis; glycogen biosynthesis. Involved in the biosynthesis of ADP-glucose, a building block required for the elongation reactions to produce glycogen. Catalyzes the reaction between ATP and alpha-D-glucose 1-phosphate (G1P) to produce pyrophosphate and ADP-Glc. This Nitrosococcus oceani (strain ATCC 19707 / BCRC 17464 / JCM 30415 / NCIMB 11848 / C-107) protein is Glucose-1-phosphate adenylyltransferase.